A 105-amino-acid polypeptide reads, in one-letter code: Large ribosomal subunit protein bL21 (105 aa).

It belongs to the bacterial ribosomal protein bL21 family. Part of the 50S ribosomal subunit. Contacts protein L20.

This protein binds to 23S rRNA in the presence of protein L20. This is Large ribosomal subunit protein bL21 from Rickettsia prowazekii (strain Madrid E).